A 208-amino-acid polypeptide reads, in one-letter code: Uracil phosphoribosyltransferase (208 aa).

5-phospho-alpha-D-ribose 1-diphosphate is bound by residues arginine 78, arginine 103, and 130–138; that span reads DPMLATGGS. Uracil is bound by residues isoleucine 193 and 198 to 200; that span reads GDA. Position 199 (aspartate 199) interacts with 5-phospho-alpha-D-ribose 1-diphosphate.

Belongs to the UPRTase family. It depends on Mg(2+) as a cofactor.

It carries out the reaction UMP + diphosphate = 5-phospho-alpha-D-ribose 1-diphosphate + uracil. It functions in the pathway pyrimidine metabolism; UMP biosynthesis via salvage pathway; UMP from uracil: step 1/1. Allosterically activated by GTP. Functionally, catalyzes the conversion of uracil and 5-phospho-alpha-D-ribose 1-diphosphate (PRPP) to UMP and diphosphate. This Shewanella oneidensis (strain ATCC 700550 / JCM 31522 / CIP 106686 / LMG 19005 / NCIMB 14063 / MR-1) protein is Uracil phosphoribosyltransferase.